The sequence spans 385 residues: MSPHLPQFTNISRIYPFTHTPIECYFNTSPRDFVIKEIPLYEPSGSGEHLLLYVRKKGLSTFELLNILSSSLGCRVRDIGYAGLKDKAATSYQYLSIHRSLQNRLESALPHLHSQHIKILTITPHNHKLKIGHLKGNSFFMRLKKVSSNNATKLHSTLELLAHSGFPNYFGNQRFGKEGDNFQSGKAISEHKLTLKNKKISNFLISSYQSHLFNAWLSSRIQLAQILRSFKPNEVLRALQSPNFPTLHTFAKSCTPQLIKTLQSQKQPFVILQGDIMCHYPFGKNFVCDDTLIESTRFLQKDIAPTGALCGTKFTHSKCLAYDIEEQFLDSQIKANGTRRYAWVWAENIEGRYIPQEAHFELHFHLPKGSYATIFLESLLSTHNC.

Asp-86 (nucleophile) is an active-site residue. Residues Gly-165–Pro-305 enclose the TRUD domain.

This sequence belongs to the pseudouridine synthase TruD family.

The catalysed reaction is uridine(13) in tRNA = pseudouridine(13) in tRNA. In terms of biological role, responsible for synthesis of pseudouridine from uracil-13 in transfer RNAs. This Helicobacter hepaticus (strain ATCC 51449 / 3B1) protein is tRNA pseudouridine synthase D.